Reading from the N-terminus, the 66-residue chain is Large ribosomal subunit protein uL29 (66 aa).

Belongs to the universal ribosomal protein uL29 family.

This is Large ribosomal subunit protein uL29 from Nitrosococcus oceani (strain ATCC 19707 / BCRC 17464 / JCM 30415 / NCIMB 11848 / C-107).